A 317-amino-acid polypeptide reads, in one-letter code: Transaldolase (317 aa).

The active-site Schiff-base intermediate with substrate is Lys-132.

Belongs to the transaldolase family. Type 1 subfamily. In terms of assembly, homodimer.

Its subcellular location is the cytoplasm. The enzyme catalyses D-sedoheptulose 7-phosphate + D-glyceraldehyde 3-phosphate = D-erythrose 4-phosphate + beta-D-fructose 6-phosphate. It participates in carbohydrate degradation; pentose phosphate pathway; D-glyceraldehyde 3-phosphate and beta-D-fructose 6-phosphate from D-ribose 5-phosphate and D-xylulose 5-phosphate (non-oxidative stage): step 2/3. In terms of biological role, transaldolase is important for the balance of metabolites in the pentose-phosphate pathway. This is Transaldolase from Yersinia pseudotuberculosis serotype O:1b (strain IP 31758).